The following is a 1493-amino-acid chain: Protein Shroom4 (1493 aa).

Positions 10–92 constitute a PDZ domain; that stretch reads YVPVQLQGGA…ILKLIVRRRN (83 aa). Positions 202 to 282 are disordered; that stretch reads CALSLRPEEP…PPQPPVRRDS (81 aa). 2 stretches are compositionally biased toward polar residues: residues 234–243 and 249–262; these read AETSGGSRRT and TPSS…QEGY. Serine 411 carries the phosphoserine modification. The tract at residues 430 to 695 is disordered; it reads GSKGMELPPV…SPGQRPGQSS (266 aa). Basic and acidic residues-rich tracts occupy residues 470–484 and 498–509; these read QSSK…DDRS and GEADGHPSEKGF. Over residues 513 to 547 the composition is skewed to polar residues; sequence NRTSRAASELANQQPSASGSLVQQATDCSSTTKAA. Serine 729 carries the post-translational modification Phosphoserine. 2 disordered regions span residues 740–759 and 781–813; these read AAME…ASTA and SKSL…NFQP. Positions 782–802 are enriched in polar residues; it reads KSLSTSHLPGLTTHSNKTFTQ. Serine 1019 carries the phosphoserine modification. 4 disordered regions span residues 1117-1170, 1187-1206, 1214-1236, and 1246-1265; these read AAQQ…ETSG, SFGH…AEQE, DFLP…PCYY, and GQEA…PPSG. Over residues 1118 to 1129 the composition is skewed to low complexity; it reads AQQQKQQQQQQK. A compositionally biased stretch (acidic residues) spans 1132–1159; that stretch reads EEEEEEEEEEEEEEEEEEEEAEEEEEEL. The ASD2 domain maps to 1213-1492; sequence SDFLPPIRGH…RESLLLGPSN (280 aa). The stretch at 1382–1488 forms a coiled coil; sequence LSGRLARVEN…LKCLRESLLL (107 aa).

The protein belongs to the shroom family. In terms of assembly, interacts directly with F-actin. As to expression, expressed in all fetal and adult tissues investigated. Expressed in adult heart, brain, placenta, lung, liver, skeletal muscle, kidney and pancreas. In brain regions detected in cerebellum, cerebral cortex, medulla, spinal cord, occipital pole, frontal lobe, temporal lobe and putamen. The expression is strongest in the medulla and weakest in the cerebral cortex.

It localises to the cytoplasm. Its subcellular location is the cytoskeleton. Functionally, probable regulator of cytoskeletal architecture that plays an important role in development. May regulate cellular and cytoskeletal architecture by modulating the spatial distribution of myosin II. The polypeptide is Protein Shroom4 (SHROOM4) (Homo sapiens (Human)).